The primary structure comprises 112 residues: Protein NIM1-INTERACTING 3 (112 aa).

Disordered stretches follow at residues 1-20 (MDRD…EEKM) and 77-112 (EKAA…NLSL). Coiled coils occupy residues 1-35 (MDRD…EMRK) and 69-96 (NKAE…SKEK). The segment covering 77 to 89 (EKAANESSSASNE) has biased composition (low complexity).

The protein belongs to the NPR1-interactor family. As to quaternary structure, interacts with NPR1 C-terminal region.

Its subcellular location is the nucleus. This chain is Protein NIM1-INTERACTING 3, found in Arabidopsis thaliana (Mouse-ear cress).